The chain runs to 332 residues: 2,3-diketo-L-gulonate reductase (332 aa).

H44 serves as the catalytic Proton donor. NAD(+)-binding positions include 168-174 (ITMVDMS), 224-225 (WK), and 304-306 (GHE).

Belongs to the LDH2/MDH2 oxidoreductase family. DlgD subfamily. As to quaternary structure, homodimer.

The protein resides in the cytoplasm. It catalyses the reaction 3-dehydro-L-gulonate + NAD(+) = 2,3-dioxo-L-gulonate + NADH + H(+). It carries out the reaction 3-dehydro-L-gulonate + NADP(+) = 2,3-dioxo-L-gulonate + NADPH + H(+). Its function is as follows. Catalyzes the reduction of 2,3-diketo-L-gulonate in the presence of NADH, to form 3-keto-L-gulonate. In Escherichia coli O127:H6 (strain E2348/69 / EPEC), this protein is 2,3-diketo-L-gulonate reductase.